The chain runs to 448 residues: Ribulose bisphosphate carboxylase large chain (448 aa).

N6,N6,N6-trimethyllysine is present on Lys-4. Residues Asn-113 and Thr-163 each contribute to the substrate site. Lys-165 (proton acceptor) is an active-site residue. Lys-167 contributes to the substrate binding site. Mg(2+)-binding residues include Lys-191, Asp-193, and Glu-194. Lys-191 carries the post-translational modification N6-carboxylysine. His-284 functions as the Proton acceptor in the catalytic mechanism. 3 residues coordinate substrate: Arg-285, His-317, and Ser-369.

The protein belongs to the RuBisCO large chain family. Type I subfamily. In terms of assembly, heterohexadecamer of 8 large chains and 8 small chains; disulfide-linked. The disulfide link is formed within the large subunit homodimers. It depends on Mg(2+) as a cofactor. The disulfide bond which can form in the large chain dimeric partners within the hexadecamer appears to be associated with oxidative stress and protein turnover.

The protein resides in the plastid. It localises to the chloroplast. It catalyses the reaction 2 (2R)-3-phosphoglycerate + 2 H(+) = D-ribulose 1,5-bisphosphate + CO2 + H2O. It carries out the reaction D-ribulose 1,5-bisphosphate + O2 = 2-phosphoglycolate + (2R)-3-phosphoglycerate + 2 H(+). Functionally, ruBisCO catalyzes two reactions: the carboxylation of D-ribulose 1,5-bisphosphate, the primary event in carbon dioxide fixation, as well as the oxidative fragmentation of the pentose substrate in the photorespiration process. Both reactions occur simultaneously and in competition at the same active site. In Eucryphia lucida (Leatherwood), this protein is Ribulose bisphosphate carboxylase large chain.